Consider the following 65-residue polypeptide: Hirudin-2 (65 aa).

An interaction with thrombin active site region spans residues 1–3; it reads ITY. 3 disulfides stabilise this stretch: Cys6/Cys14, Cys16/Cys28, and Cys22/Cys39. The tract at residues 39–65 is disordered; it reads CVTGEGTPKPQSHNDGDFEEIPEEYLQ. O-linked (GalNAc...) threonine glycosylation is present at Thr45. The interaction with fibrinogen-binding exosite of thrombin stretch occupies residues 55-65; sequence DFEEIPEEYLQ. The segment covering 55–65 has biased composition (acidic residues); that stretch reads DFEEIPEEYLQ. Tyr63 carries the post-translational modification Sulfotyrosine.

The protein belongs to the protease inhibitor I14 (hirudin) family.

It is found in the secreted. In terms of biological role, hirudin is a potent thrombin-specific protease inhibitor. It forms a stable non-covalent complex with alpha-thrombin, thereby abolishing its ability to cleave fibrinogen. This Hirudo medicinalis (Medicinal leech) protein is Hirudin-2.